Reading from the N-terminus, the 189-residue chain is MKSIMRSCLGLFVLLTVITGVLYPVFVTGLAKTFFPSKASGSIVYQGDQAIGSELIGQNFTDAKYFWGRPSATGPQPYNGTASGGSNQGPLNPALVDAVKGRIEALQNADSTNQLPIPMDLVTASASGLDPEISPQAAQYQASRVAKARKMSLDNVNQLIAANTQDRQWGIFGEPRVNVLKLNLALDGN.

The helical transmembrane segment at 11-31 threads the bilayer; the sequence is LFVLLTVITGVLYPVFVTGLA.

This sequence belongs to the KdpC family. The system is composed of three essential subunits: KdpA, KdpB and KdpC.

Its subcellular location is the cell inner membrane. Functionally, part of the high-affinity ATP-driven potassium transport (or Kdp) system, which catalyzes the hydrolysis of ATP coupled with the electrogenic transport of potassium into the cytoplasm. This subunit acts as a catalytic chaperone that increases the ATP-binding affinity of the ATP-hydrolyzing subunit KdpB by the formation of a transient KdpB/KdpC/ATP ternary complex. In Polynucleobacter asymbioticus (strain DSM 18221 / CIP 109841 / QLW-P1DMWA-1) (Polynucleobacter necessarius subsp. asymbioticus), this protein is Potassium-transporting ATPase KdpC subunit.